Consider the following 411-residue polypeptide: Adenylosuccinate synthetase (411 aa).

GTP contacts are provided by residues 11–17 and 39–41; these read GDEGKGK and GHT. Catalysis depends on aspartate 12, which acts as the Proton acceptor. Mg(2+)-binding residues include aspartate 12 and glycine 39. Residues 12-15, 37-40, threonine 121, arginine 135, glutamine 215, threonine 230, and arginine 294 contribute to the IMP site; these read DEGK and NAGH. Histidine 40 acts as the Proton donor in catalysis. Substrate is bound at residue 290–296; that stretch reads TTTKRPR. GTP contacts are provided by residues arginine 296, 322 to 324, and 400 to 402; these read KLD and STS.

This sequence belongs to the adenylosuccinate synthetase family. As to quaternary structure, homodimer. Requires Mg(2+) as cofactor.

It is found in the cytoplasm. It carries out the reaction IMP + L-aspartate + GTP = N(6)-(1,2-dicarboxyethyl)-AMP + GDP + phosphate + 2 H(+). The protein operates within purine metabolism; AMP biosynthesis via de novo pathway; AMP from IMP: step 1/2. In terms of biological role, plays an important role in the de novo pathway of purine nucleotide biosynthesis. Catalyzes the first committed step in the biosynthesis of AMP from IMP. The sequence is that of Adenylosuccinate synthetase from Helicobacter acinonychis (strain Sheeba).